Here is a 258-residue protein sequence, read N- to C-terminus: MLDAMREKPPLVHCITNYVAMNIAANVLLASGASPAMVHAPEEAGEFAGIASALTVNIGTLSTQWIDGMQAAAKAAASAGKPWVLDPVAHYATTFRRQAVADLLALKPTIIRGNASEIIALAGGESRGQGVDSRDPVEQAEDSARRLAERQQAIVAVTGAVDFVTDGERAVRIKGGSVLMPEVTALGCSLTCLIGAFAATAPEDLFGATVAALATFAVAGEDAALGAAGPGSFAWRFLDALAALDGEALDARARVSLA.

M37 serves as a coordination point for substrate. The ATP site is built by R112 and T158. Residue A185 participates in substrate binding.

It belongs to the Thz kinase family. The cofactor is Mg(2+).

It catalyses the reaction 5-(2-hydroxyethyl)-4-methylthiazole + ATP = 4-methyl-5-(2-phosphooxyethyl)-thiazole + ADP + H(+). Its pathway is cofactor biosynthesis; thiamine diphosphate biosynthesis; 4-methyl-5-(2-phosphoethyl)-thiazole from 5-(2-hydroxyethyl)-4-methylthiazole: step 1/1. In terms of biological role, catalyzes the phosphorylation of the hydroxyl group of 4-methyl-5-beta-hydroxyethylthiazole (THZ). This Rhizobium etli (strain ATCC 51251 / DSM 11541 / JCM 21823 / NBRC 15573 / CFN 42) protein is Hydroxyethylthiazole kinase.